A 273-amino-acid polypeptide reads, in one-letter code: 3-methyl-2-oxobutanoate hydroxymethyltransferase (273 aa).

2 residues coordinate Mg(2+): Asp53 and Asp92. 3-methyl-2-oxobutanoate is bound by residues 53-54, Asp92, and Lys122; that span reads DS. Mg(2+) is bound at residue Glu124. Catalysis depends on Glu191, which acts as the Proton acceptor.

This sequence belongs to the PanB family. In terms of assembly, homodecamer; pentamer of dimers. The cofactor is Mg(2+).

Its subcellular location is the cytoplasm. The enzyme catalyses 3-methyl-2-oxobutanoate + (6R)-5,10-methylene-5,6,7,8-tetrahydrofolate + H2O = 2-dehydropantoate + (6S)-5,6,7,8-tetrahydrofolate. The protein operates within cofactor biosynthesis; (R)-pantothenate biosynthesis; (R)-pantoate from 3-methyl-2-oxobutanoate: step 1/2. Catalyzes the reversible reaction in which hydroxymethyl group from 5,10-methylenetetrahydrofolate is transferred onto alpha-ketoisovalerate to form ketopantoate. The chain is 3-methyl-2-oxobutanoate hydroxymethyltransferase from Porphyromonas gingivalis (strain ATCC 33277 / DSM 20709 / CIP 103683 / JCM 12257 / NCTC 11834 / 2561).